The sequence spans 356 residues: Methylthioribose-1-phosphate isomerase (356 aa).

Substrate contacts are provided by residues 53–55 (RGA), arginine 97, and glutamine 203. The Proton donor role is filled by aspartate 244. 254 to 255 (NK) contacts substrate.

Belongs to the eIF-2B alpha/beta/delta subunits family. MtnA subfamily.

The catalysed reaction is 5-(methylsulfanyl)-alpha-D-ribose 1-phosphate = 5-(methylsulfanyl)-D-ribulose 1-phosphate. The protein operates within amino-acid biosynthesis; L-methionine biosynthesis via salvage pathway; L-methionine from S-methyl-5-thio-alpha-D-ribose 1-phosphate: step 1/6. Catalyzes the interconversion of methylthioribose-1-phosphate (MTR-1-P) into methylthioribulose-1-phosphate (MTRu-1-P). In Rhodopirellula baltica (strain DSM 10527 / NCIMB 13988 / SH1), this protein is Methylthioribose-1-phosphate isomerase.